Consider the following 311-residue polypeptide: tRNA dimethylallyltransferase (311 aa).

19-26 (GPSGSGKS) is a binding site for ATP. Position 21–26 (21–26 (SGSGKS)) interacts with substrate. Residues 44–47 (DSLS) are interaction with substrate tRNA.

Belongs to the IPP transferase family. As to quaternary structure, monomer. The cofactor is Mg(2+).

The catalysed reaction is adenosine(37) in tRNA + dimethylallyl diphosphate = N(6)-dimethylallyladenosine(37) in tRNA + diphosphate. Catalyzes the transfer of a dimethylallyl group onto the adenine at position 37 in tRNAs that read codons beginning with uridine, leading to the formation of N6-(dimethylallyl)adenosine (i(6)A). The chain is tRNA dimethylallyltransferase from Helicobacter pylori (strain ATCC 700392 / 26695) (Campylobacter pylori).